The sequence spans 459 residues: Vasoactive intestinal polypeptide receptor 1 (459 aa).

Positions 1–30 are cleaved as a signal peptide; it reads MRPPSPPHVRWLCVLAGALACALRPAGSQA. At 31-142 the chain is on the extracellular side; the sequence is ASPQHECEYL…EQQQTKFYNT (112 aa). 5 disulfides stabilise this stretch: C37-C209, C50-C72, C63-C105, C86-C122, and C216-C286. N-linked (GlcNAc...) asparagine glycans are attached at residues N58, N69, and N100. Residues 143 to 167 traverse the membrane as a helical segment; sequence VKTGYTIGYSLSLASLLVAMAILSL. The Cytoplasmic portion of the chain corresponds to 168–175; sequence FRKLHCTR. A helical transmembrane segment spans residues 176–197; the sequence is NYIHMHLFMSFILRATAVFIKD. At 198–217 the chain is on the extracellular side; that stretch reads MALFNSGEIDHCSEASVGCK. A helical transmembrane segment spans residues 218–242; sequence AAVVFFQYCVMANFFWLLVEGLYLY. Over 243–255 the chain is Cytoplasmic; it reads TLLAVSFFSERKY. Residues 256–277 traverse the membrane as a helical segment; sequence FWGYILIGWGVPSVFITIWTVV. Residues 278–293 are Extracellular-facing; it reads RIYFEDFGCWDTIINS. A glycan (N-linked (GlcNAc...) asparagine) is linked at N292. A helical transmembrane segment spans residues 294–318; the sequence is SLWWIIKAPILLSILVNFVLFICII. Residues 319–340 are Cytoplasmic-facing; that stretch reads RILVQKLRPPDIGKNDSSPYSR. The helical transmembrane segment at 341 to 361 threads the bilayer; the sequence is LAKSTLLLIPLFGIHYVMFAF. Topologically, residues 362–369 are extracellular; sequence FPDNFKAQ. A helical membrane pass occupies residues 370-393; sequence VKMVFELVVGSFQGFVVAILYCFL. Residues 394–459 are Cytoplasmic-facing; the sequence is NGEVQAELRR…SSFQAEVSLV (66 aa).

The protein belongs to the G-protein coupled receptor 2 family. Interacts with ADCYAP1/PACAP; activated by both PACAP27 and PACAP38 neuropeptides. Interacts with VIP; the interaction results in VIPR1 activation. In liver, lung, intestines, thymus and brain (mostly in the cerebral cortex and hippocampus).

The protein localises to the cell membrane. Its function is as follows. G protein-coupled receptor activated by the neuropeptides vasoactive intestinal peptide (VIP) and pituitary adenylate cyclase-activating polypeptide (ADCYAP1/PACAP). Binds VIP and both PACAP27 and PACAP38 bioactive peptides with the following order of ligand affinity VIP = PACAP27 &gt; PACAP38. Ligand binding causes a conformation change that triggers signaling via guanine nucleotide-binding proteins (G proteins) and modulates the activity of downstream effectors. Activates cAMP-dependent pathway. This chain is Vasoactive intestinal polypeptide receptor 1, found in Rattus norvegicus (Rat).